The sequence spans 212 residues: Ras-related protein Rab-15 (212 aa).

10 residues coordinate GTP: Ser17, Gly18, Val19, Gly20, Lys21, Thr22, Cys23, Ser35, Ser39, and Thr40. Residue Thr22 participates in Mg(2+) binding. 2 short sequence motifs (switch) span residues 31 to 45 (NEFHSSHISTIGVDF) and 63 to 80 (DTAGQERYQTITKQYYRR). Residues Thr40 and Asp63 each contribute to the Mg(2+) site. GTP is bound by residues Gly66, Asn121, Lys122, Asp124, Ser151, and Ala152. Positions 193–212 (LEEEEGKPEGPANSSKTCWC) are disordered. Residues Cys210 and Cys212 are each lipidated (S-geranylgeranyl cysteine). Cysteine methyl ester is present on Cys212.

Belongs to the small GTPase superfamily. Rab family. In terms of assembly, the GTP bound form of RAB15 interacts with REP15. Interacts (GTP-bound form) with MICAL1, MICAL3, MICALCL, EHBP1 and EHBP1L1. Mg(2+) serves as cofactor.

It is found in the cell membrane. The enzyme catalyses GTP + H2O = GDP + phosphate + H(+). With respect to regulation, regulated by guanine nucleotide exchange factors (GEFs) which promote the exchange of bound GDP for free GTP. Regulated by GTPase activating proteins (GAPs) which increase the GTP hydrolysis activity. Inhibited by GDP dissociation inhibitors (GDIs). The small GTPases Rab are key regulators of intracellular membrane trafficking, from the formation of transport vesicles to their fusion with membranes. Rabs cycle between an inactive GDP-bound form and an active GTP-bound form that is able to recruit to membranes different sets of downstream effectors directly responsible for vesicle formation, movement, tethering and fusion. RAB15 may act in concert with RAB3A in regulating aspects of synaptic vesicle membrane flow within the nerve terminal. The protein is Ras-related protein Rab-15 of Homo sapiens (Human).